The following is a 120-amino-acid chain: Secreted RxLR effector protein RXLR-C26 (120 aa).

An N-terminal signal peptide occupies residues 1-29 (MTGILCFPPFARFFMLLSGCAWLAGVSSG). The short motif at 57 to 77 (RNLRGHINSAIIEANDTSEER) is the RxLR-dEER element. Asn-71 is a glycosylation site (N-linked (GlcNAc...) asparagine).

It belongs to the RxLR effector family.

The protein localises to the secreted. It localises to the host cytoplasm. It is found in the host nucleus. Its function is as follows. Secreted effector that does not suppress pattern-triggered immunity (PTI) in plant host. The sequence is that of Secreted RxLR effector protein RXLR-C26 from Plasmopara halstedii (Downy mildew of sunflower).